A 205-amino-acid chain; its full sequence is Holliday junction branch migration complex subunit RuvA (205 aa).

A domain I region spans residues 1–64 (MIGKLKGTID…EDQLRLFGFL (64 aa)). Residues 65-143 (SALEREWFRL…AFAGEMSASI (79 aa)) form a domain II region. The tract at residues 144-153 (GLKQELGEGV) is flexible linker. Residues 153–205 (VAAAPVSDAVSALTNLGYSRDQAANAVAAALKNGGEGGDSAKLIRLGLKELAR) are domain III.

Belongs to the RuvA family. As to quaternary structure, homotetramer. Forms an RuvA(8)-RuvB(12)-Holliday junction (HJ) complex. HJ DNA is sandwiched between 2 RuvA tetramers; dsDNA enters through RuvA and exits via RuvB. An RuvB hexamer assembles on each DNA strand where it exits the tetramer. Each RuvB hexamer is contacted by two RuvA subunits (via domain III) on 2 adjacent RuvB subunits; this complex drives branch migration. In the full resolvosome a probable DNA-RuvA(4)-RuvB(12)-RuvC(2) complex forms which resolves the HJ.

The protein resides in the cytoplasm. Functionally, the RuvA-RuvB-RuvC complex processes Holliday junction (HJ) DNA during genetic recombination and DNA repair, while the RuvA-RuvB complex plays an important role in the rescue of blocked DNA replication forks via replication fork reversal (RFR). RuvA specifically binds to HJ cruciform DNA, conferring on it an open structure. The RuvB hexamer acts as an ATP-dependent pump, pulling dsDNA into and through the RuvAB complex. HJ branch migration allows RuvC to scan DNA until it finds its consensus sequence, where it cleaves and resolves the cruciform DNA. The polypeptide is Holliday junction branch migration complex subunit RuvA (Sinorhizobium fredii (strain NBRC 101917 / NGR234)).